The primary structure comprises 47 residues: uncharacterized protein (47 aa).

The signal sequence occupies residues 1 to 25 (MAHKCASAKLLSGIMALLFNGKSLL).

This is an uncharacterized protein from Saccharomyces cerevisiae (strain ATCC 204508 / S288c) (Baker's yeast).